Reading from the N-terminus, the 312-residue chain is Olfactory receptor 4K17 (312 aa).

Over 1–25 the chain is Extracellular; that stretch reads MKLLNQSQVSEFILLGLTSSQDVEF. Asn5 carries N-linked (GlcNAc...) asparagine glycosylation. A helical transmembrane segment spans residues 26 to 49; the sequence is LLFALFSVIYVVTVLGNLLIIVTV. Residues 50-57 are Cytoplasmic-facing; it reads FNTPNLNT. A helical transmembrane segment spans residues 58–79; the sequence is PMYFLLGNLSFVDMTLASFATP. Over 80–100 the chain is Extracellular; it reads KVILNLLKKQKVISFAGCFTQ. Cys97 and Cys189 are joined by a disulfide. The helical transmembrane segment at 101–120 threads the bilayer; the sequence is IFLLHLLGGVEMVLLVSMAF. Residues 121 to 139 lie on the Cytoplasmic side of the membrane; sequence DRYVAICKPLHYMTIMNKK. The chain crosses the membrane as a helical span at residues 140-158; the sequence is VCVLLVVTSWLLGLLHSGF. Topologically, residues 159–195 are extracellular; that stretch reads QIPFAVNLPFCGPNVVDSIFCDLPLVTKLACIDIYFV. The helical transmembrane segment at 196–219 threads the bilayer; sequence QVVIVANSGIISLSCFIILLISYS. At 220 to 235 the chain is on the cytoplasmic side; sequence LILITIKNHSPTGQSK. A helical membrane pass occupies residues 236-258; sequence ARSTLTAHITVVILFFGPCIFIY. Residues 259-269 lie on the Extracellular side of the membrane; that stretch reads IWPFGNHSVDK. Asn264 carries an N-linked (GlcNAc...) asparagine glycan. A helical transmembrane segment spans residues 270 to 289; sequence FLAVFYTIITPILNPIIYTL. The Cytoplasmic segment spans residues 290 to 312; sequence RNKEMKISMKKLWRAFVNSREDT.

Belongs to the G-protein coupled receptor 1 family.

Its subcellular location is the cell membrane. In terms of biological role, odorant receptor. The polypeptide is Olfactory receptor 4K17 (OR4K17) (Homo sapiens (Human)).